Consider the following 357-residue polypeptide: Isoflavone 7-O-methyltransferase (357 aa).

Residues 200-203, aspartate 224, 224-225, 244-245, and lysine 258 contribute to the S-adenosyl-L-methionine site; these read VGGG, DR, and DM. Histidine 262 acts as the Proton acceptor in catalysis.

This sequence belongs to the class I-like SAM-binding methyltransferase superfamily. Cation-independent O-methyltransferase family. COMT subfamily.

The catalysed reaction is a 7-hydroxyisoflavone + S-adenosyl-L-methionine = a 7-methoxyisoflavone + S-adenosyl-L-homocysteine + H(+). Its function is as follows. 7-O-methyltransferase involved in the biosynthesis of isoformononetin. Can use daidzein as substrate, but not medicarpin or 2,7,4'-trihydroxyisoflavanone. This Glycyrrhiza echinata (Licorice) protein is Isoflavone 7-O-methyltransferase (D7OMT).